The sequence spans 395 residues: General transcription factor IIH subunit 2 (395 aa).

In terms of domain architecture, VWFA spans 60–236 (HLYVVVDGSR…HYKELLTHHV (177 aa)). Tyr95 carries the phosphotyrosine modification. The C4-type zinc finger occupies 291 to 308 (CPQCRAKYCELPVECKIC).

This sequence belongs to the GTF2H2 family. As to quaternary structure, component of the TFIID-containing RNA polymerase II pre-initiation complex that is composed of TBP and at least GTF2A1, GTF2A2, GTF2E1, GTF2E2, GTF2F1, GTF2H2, GTF2H3, GTF2H4, GTF2H5, GTF2B, TCEA1, ERCC2 and ERCC3. Component of the 7-subunit TFIIH core complex composed of XPB/ERCC3, XPD/ERCC2, GTF2H1, GTF2H2, GTF2H3, GTF2H4 and GTF2H5, which is active in NER. The core complex associates with the 3-subunit CDK-activating kinase (CAK) module composed of CCNH/cyclin H, CDK7 and MNAT1 to form the 10-subunit holoenzyme (holo-TFIIH) active in transcription. Interacts with XPB, XPD, GTF2H1 and GTF2H3.

The protein localises to the nucleus. In terms of biological role, component of the general transcription and DNA repair factor IIH (TFIIH) core complex, which is involved in general and transcription-coupled nucleotide excision repair (NER) of damaged DNA and, when complexed to CAK, in RNA transcription by RNA polymerase II. In NER, TFIIH acts by opening DNA around the lesion to allow the excision of the damaged oligonucleotide and its replacement by a new DNA fragment. In transcription, TFIIH has an essential role in transcription initiation. When the pre-initiation complex (PIC) has been established, TFIIH is required for promoter opening and promoter escape. Phosphorylation of the C-terminal tail (CTD) of the largest subunit of RNA polymerase II by the kinase module CAK controls the initiation of transcription. The N-terminus of GTF2H2 interacts with and regulates XPD whereas an intact C-terminus is required for a successful escape of RNAP II form the promoter. The sequence is that of General transcription factor IIH subunit 2 (GTF2H2) from Bos taurus (Bovine).